Reading from the N-terminus, the 313-residue chain is Fe-S cluster assembly protein dre2 (313 aa).

Disordered stretches follow at residues 1 to 25 (MSITIDTSVDIDLPTPPQSNGSQKR) and 151 to 187 (GRKKKDKTNGVNGVQNGVATNGASTNGVGMFDPAQNN). Residues 20–145 (NGSQKRNLLL…FEKPVQEAAV (126 aa)) are N-terminal SAM-like domain. The linker stretch occupies residues 146 to 203 (PLKLGGRKKKDKTNGVNGVQNGVATNGASTNGVGMFDPAQNNDDELIDEDALLSDDDL). The span at 159–177 (NGVNGVQNGVATNGASTNG) shows a compositional bias: polar residues. C213, C225, C228, and C230 together coordinate [2Fe-2S] cluster. The fe-S binding site A stretch occupies residues 213–230 (CVPETAKKRRRPCKDCTC). Residues C276, C279, C287, and C290 each contribute to the [4Fe-4S] cluster site. 2 short sequence motifs (cx2C motif) span residues 276–279 (CNSC) and 287–290 (CSSC). The interval 276–290 (CNSCSLGDAFRCSSC) is fe-S binding site B.

Belongs to the anamorsin family. Monomer. Interacts with tah18. Interacts with mia40. The cofactor is [2Fe-2S] cluster. Requires [4Fe-4S] cluster as cofactor.

The protein localises to the cytoplasm. The protein resides in the mitochondrion intermembrane space. Functionally, component of the cytosolic iron-sulfur (Fe-S) protein assembly (CIA) machinery required for the maturation of extramitochondrial Fe-S proteins. Part of an electron transfer chain functioning in an early step of cytosolic Fe-S biogenesis, facilitating the de novo assembly of a [4Fe-4S] cluster on the scaffold complex cfd1-nbp35. Electrons are transferred to dre2 from NADPH via the FAD- and FMN-containing protein tah18. Tah18-dre2 are also required for the assembly of the diferric tyrosyl radical cofactor of ribonucleotide reductase (RNR), probably by providing electrons for reduction during radical cofactor maturation in the catalytic small subunit rnr2. The polypeptide is Fe-S cluster assembly protein dre2 (Aspergillus oryzae (strain ATCC 42149 / RIB 40) (Yellow koji mold)).